The chain runs to 1050 residues: Atrial natriuretic peptide receptor 2 (1050 aa).

A signal peptide spans 1–19 (MDLGHSLFVVFTCFLMARC). Over 20–460 (RTEIGKNITV…FCNEDQLPVL (441 aa)) the chain is Extracellular. N-linked (GlcNAc...) asparagine glycosylation is found at asparagine 26 and asparagine 74. A disulfide bridge links cysteine 84 with cysteine 110. Asparagine 169, asparagine 203, asparagine 285, asparagine 352, asparagine 366, and asparagine 415 each carry an N-linked (GlcNAc...) asparagine glycan. Cysteine 236 and cysteine 339 are oxidised to a cystine. Residues 461 to 481 (GIVAVGSGLALIIFGISSFLI) form a helical membrane-spanning segment. The Cytoplasmic portion of the chain corresponds to 482–1050 (YRKLKLEKEL…LGEKTDVYVI (569 aa)). A Protein kinase domain is found at 517–790 (SRLTISQRGS…PDFSYIKIFV (274 aa)). The Guanylate cyclase domain maps to 865 to 995 (TIYFSDIVGF…DTVNTASRME (131 aa)).

This sequence belongs to the adenylyl cyclase class-4/guanylyl cyclase family. Post-translationally, phosphorylated. Phosphorylation of the protein kinase-like domain is required for full activation by CNP. Glycosylated. High levels found in liver, atrium and gill. Moderate levels found in brain and ventricle, and low levels in esophageal sphincter, stomach, posterior intestine and kidney.

It is found in the cell membrane. The catalysed reaction is GTP = 3',5'-cyclic GMP + diphosphate. Functionally, receptor for the C-type natriuretic peptide NPPC/CNP hormone. Has guanylate cyclase activity upon binding of its ligand. May play a role in the regulation of skeletal growth. This Anguilla japonica (Japanese eel) protein is Atrial natriuretic peptide receptor 2 (npr2).